Consider the following 443-residue polypeptide: Immediate-early protein ICP-46 homolog (443 aa).

Positions 82–110 form a coiled coil; the sequence is EFSEHEQEELKEKMAQLNHCLEDCELDYS.

It belongs to the IIV-6 393L family.

The polypeptide is Immediate-early protein ICP-46 homolog (Aedes vexans (Inland floodwater mosquito)).